The sequence spans 522 residues: Zinc finger and BTB domain-containing protein 18 (522 aa).

A BTB domain is found at C24 to D91. A compositionally biased stretch (basic and acidic residues) spans A121 to S143. Residues A121–K166 are disordered. The residue at position 157 (S157) is a Phosphoserine. K273 participates in a covalent cross-link: Glycyl lysine isopeptide (Lys-Gly) (interchain with G-Cter in SUMO2). The interval E310–R427 is interaction with DNMT3A. 4 C2H2-type zinc fingers span residues F370–H392, P410–H432, Y438–H460, and H466–H489. 2 positions are modified to phosphoserine: S516 and S517.

This sequence belongs to the krueppel C2H2-type zinc-finger protein family. ZBTB18 subfamily. In terms of assembly, interacts with DNMT3A.

It is found in the nucleus. Functionally, transcriptional repressor that plays a role in various developmental processes such as myogenesis and brain development. Specifically binds the consensus DNA sequence 5'-[AC]ACATCTG[GT][AC]-3' which contains the E box core, and acts by recruiting chromatin remodeling multiprotein complexes. Plays a key role in myogenesis by directly repressing the expression of ID2 and ID3, 2 inhibitors of skeletal myogenesis. Also involved in controlling cell division of progenitor cells and regulating the survival of postmitotic cortical neurons. May also play a role in the organization of chromosomes in the nucleus. This Rattus norvegicus (Rat) protein is Zinc finger and BTB domain-containing protein 18 (Zbtb18).